We begin with the raw amino-acid sequence, 260 residues long: Carbonic anhydrase 2 (260 aa).

Positions 3 to 259 constitute an Alpha-carbonic anhydrase domain; that stretch reads HHWGYDSHNG…LKSREVRASF (257 aa). His64 functions as the Proton donor/acceptor in the catalytic mechanism. The Zn(2+) site is built by His94, His96, and His119. Substrate is bound at residue 198 to 199; that stretch reads TT.

This sequence belongs to the alpha-carbonic anhydrase family. The cofactor is Zn(2+).

It localises to the cytoplasm. Its subcellular location is the cell membrane. It catalyses the reaction hydrogencarbonate + H(+) = CO2 + H2O. The catalysed reaction is urea = cyanamide + H2O. With respect to regulation, inhibited by acetazolamide. Functionally, catalyzes the reversible hydration of carbon dioxide. Can also hydrate cyanamide to urea. The sequence is that of Carbonic anhydrase 2 (CA2) from Gallus gallus (Chicken).